We begin with the raw amino-acid sequence, 302 residues long: Small ribosomal subunit biogenesis GTPase RsgA (302 aa).

Residues 69–229 (KNLLIRPKVA…VGDTPGFSKV (161 aa)) form the CP-type G domain. Residues 118–121 (NKID) and 172–180 (GPSGVGKSS) each bind GTP. Residues Cys-252, Cys-257, His-259, and Cys-265 each coordinate Zn(2+).

Belongs to the TRAFAC class YlqF/YawG GTPase family. RsgA subfamily. As to quaternary structure, monomer. Associates with 30S ribosomal subunit, binds 16S rRNA. Requires Zn(2+) as cofactor.

It localises to the cytoplasm. Its function is as follows. One of several proteins that assist in the late maturation steps of the functional core of the 30S ribosomal subunit. Helps release RbfA from mature subunits. May play a role in the assembly of ribosomal proteins into the subunit. Circularly permuted GTPase that catalyzes slow GTP hydrolysis, GTPase activity is stimulated by the 30S ribosomal subunit. This is Small ribosomal subunit biogenesis GTPase RsgA from Aquifex aeolicus (strain VF5).